Reading from the N-terminus, the 105-residue chain is Protein RALF-like 21 (105 aa).

The N-terminal stretch at 1–30 is a signal peptide; it reads MSNMKITNRFMLVATFIACVFISSMNMTVG. 2 cysteine pairs are disulfide-bonded: C44–C53 and C67–C73.

The protein belongs to the plant rapid alkalinization factor (RALF) family. Expressed in seeds and rosettes.

It localises to the secreted. Cell signaling peptide that may regulate plant stress, growth, and development. Mediates a rapid alkalinization of extracellular space by mediating a transient increase in the cytoplasmic Ca(2+) concentration leading to a calcium-dependent signaling events through a cell surface receptor and a concomitant activation of some intracellular mitogen-activated protein kinases. This Arabidopsis thaliana (Mouse-ear cress) protein is Protein RALF-like 21 (RALFL21).